A 241-amino-acid chain; its full sequence is Small ribosomal subunit protein uS2 (241 aa).

The protein belongs to the universal ribosomal protein uS2 family.

In Escherichia coli (strain 55989 / EAEC), this protein is Small ribosomal subunit protein uS2.